Consider the following 361-residue polypeptide: UDP-3-O-acylglucosamine N-acyltransferase (361 aa).

The active-site Proton acceptor is His-264.

This sequence belongs to the transferase hexapeptide repeat family. LpxD subfamily. In terms of assembly, homotrimer.

The catalysed reaction is a UDP-3-O-[(3R)-3-hydroxyacyl]-alpha-D-glucosamine + a (3R)-hydroxyacyl-[ACP] = a UDP-2-N,3-O-bis[(3R)-3-hydroxyacyl]-alpha-D-glucosamine + holo-[ACP] + H(+). Its pathway is bacterial outer membrane biogenesis; LPS lipid A biosynthesis. Functionally, catalyzes the N-acylation of UDP-3-O-acylglucosamine using 3-hydroxyacyl-ACP as the acyl donor. Is involved in the biosynthesis of lipid A, a phosphorylated glycolipid that anchors the lipopolysaccharide to the outer membrane of the cell. The polypeptide is UDP-3-O-acylglucosamine N-acyltransferase (Bordetella avium (strain 197N)).